The sequence spans 138 residues: Small ribosomal subunit protein uS11c (138 aa).

Positions 1-23 are disordered; sequence MAKTIPRIGSRKNGRIGSRKNTR. Positions 9-23 are enriched in basic residues; sequence GSRKNGRIGSRKNTR.

Belongs to the universal ribosomal protein uS11 family. Part of the 30S ribosomal subunit.

It is found in the plastid. It localises to the chloroplast. The polypeptide is Small ribosomal subunit protein uS11c (Daucus carota (Wild carrot)).